The following is a 247-amino-acid chain: Tetraspanin-18 (247 aa).

At 1-15 the chain is on the cytoplasmic side; sequence MEGDCLSCMKYLMFL. The chain crosses the membrane as a helical span at residues 16 to 36; sequence FNFFIFLGGACLLGVGIWVIV. Topologically, residues 37 to 49 are extracellular; the sequence is DPTGFREIVAANP. A helical membrane pass occupies residues 50–70; sequence LLFTGAYIMLAMGAMLFLLGF. Topologically, residues 71–82 are cytoplasmic; sequence LGCCGAIRENKC. A helical transmembrane segment spans residues 83-103; sequence LLLFFFMFILLIFLAELSAAI. The Extracellular segment spans residues 104–222; the sequence is LAFIFRENLT…SFETYVYLAG (119 aa). N-linked (GlcNAc...) asparagine glycosylation is found at asparagine 111 and asparagine 129. Residues 223-243 form a helical membrane-spanning segment; that stretch reads ALAIGVLAIELFAMIFAMCLF. The Cytoplasmic portion of the chain corresponds to 244 to 247; that stretch reads RGIQ.

Belongs to the tetraspanin (TM4SF) family.

The protein localises to the membrane. Its function is as follows. Maintains CDH6 protein and promotes CDH6-dependent adherens junctions, inhibiting neural crest migration. The chain is Tetraspanin-18 from Gallus gallus (Chicken).